We begin with the raw amino-acid sequence, 309 residues long: Biotin synthase (309 aa).

One can recognise a Radical SAM core domain in the interval 35–259 (NKIQISSLLS…MIPKSYIRLS (225 aa)). 3 residues coordinate [4Fe-4S] cluster: C50, C54, and C57. [2Fe-2S] cluster is bound by residues C94, C125, C185, and R257.

The protein belongs to the radical SAM superfamily. Biotin synthase family. As to quaternary structure, homodimer. It depends on [4Fe-4S] cluster as a cofactor. [2Fe-2S] cluster serves as cofactor.

The enzyme catalyses (4R,5S)-dethiobiotin + (sulfur carrier)-SH + 2 reduced [2Fe-2S]-[ferredoxin] + 2 S-adenosyl-L-methionine = (sulfur carrier)-H + biotin + 2 5'-deoxyadenosine + 2 L-methionine + 2 oxidized [2Fe-2S]-[ferredoxin]. It functions in the pathway cofactor biosynthesis; biotin biosynthesis; biotin from 7,8-diaminononanoate: step 2/2. Its function is as follows. Catalyzes the conversion of dethiobiotin (DTB) to biotin by the insertion of a sulfur atom into dethiobiotin via a radical-based mechanism. The protein is Biotin synthase of Rickettsia felis (strain ATCC VR-1525 / URRWXCal2) (Rickettsia azadi).